The following is a 104-amino-acid chain: Large ribosomal subunit protein uL24 (104 aa).

It belongs to the universal ribosomal protein uL24 family. In terms of assembly, part of the 50S ribosomal subunit.

In terms of biological role, one of two assembly initiator proteins, it binds directly to the 5'-end of the 23S rRNA, where it nucleates assembly of the 50S subunit. Functionally, one of the proteins that surrounds the polypeptide exit tunnel on the outside of the subunit. The chain is Large ribosomal subunit protein uL24 from Clostridium botulinum (strain Alaska E43 / Type E3).